We begin with the raw amino-acid sequence, 89 residues long: MATVIAKIKAMPTSPEINKETLKESLKELVEKFGAKCRGVIDEPLAFGLYSVFIMVEMEEQEGGMDPIEEAMNALDDVESAEVVELSLV.

The protein belongs to the EF-1-beta/EF-1-delta family.

In terms of biological role, promotes the exchange of GDP for GTP in EF-1-alpha/GDP, thus allowing the regeneration of EF-1-alpha/GTP that could then be used to form the ternary complex EF-1-alpha/GTP/AAtRNA. The polypeptide is Elongation factor 1-beta (Methanococcus vannielii (strain ATCC 35089 / DSM 1224 / JCM 13029 / OCM 148 / SB)).